We begin with the raw amino-acid sequence, 79 residues long: Translational regulator CsrA (79 aa).

It belongs to the CsrA/RsmA family. As to quaternary structure, homodimer; the beta-strands of each monomer intercalate to form a hydrophobic core, while the alpha-helices form wings that extend away from the core.

It is found in the cytoplasm. In terms of biological role, a translational regulator that binds mRNA to regulate translation initiation and/or mRNA stability. Usually binds in the 5'-UTR at or near the Shine-Dalgarno sequence preventing ribosome-binding, thus repressing translation. Its main target seems to be the major flagellin gene, while its function is anatagonized by FliW. This Leptospira biflexa serovar Patoc (strain Patoc 1 / Ames) protein is Translational regulator CsrA.